We begin with the raw amino-acid sequence, 149 residues long: D-aminoacyl-tRNA deacylase (149 aa).

The Gly-cisPro motif, important for rejection of L-amino acids signature appears at 137 to 138; the sequence is GP.

This sequence belongs to the DTD family. In terms of assembly, homodimer.

Its subcellular location is the cytoplasm. The catalysed reaction is glycyl-tRNA(Ala) + H2O = tRNA(Ala) + glycine + H(+). It catalyses the reaction a D-aminoacyl-tRNA + H2O = a tRNA + a D-alpha-amino acid + H(+). Functionally, an aminoacyl-tRNA editing enzyme that deacylates mischarged D-aminoacyl-tRNAs. Also deacylates mischarged glycyl-tRNA(Ala), protecting cells against glycine mischarging by AlaRS. Acts via tRNA-based rather than protein-based catalysis; rejects L-amino acids rather than detecting D-amino acids in the active site. By recycling D-aminoacyl-tRNA to D-amino acids and free tRNA molecules, this enzyme counteracts the toxicity associated with the formation of D-aminoacyl-tRNA entities in vivo and helps enforce protein L-homochirality. The chain is D-aminoacyl-tRNA deacylase from Syntrophus aciditrophicus (strain SB).